Consider the following 521-residue polypeptide: Zinc finger protein GLIS2 (521 aa).

The segment at 35 to 174 is interaction with CTNND1; sequence ALHRELGLVD…AKQLVCRWAK (140 aa). 2 disordered regions span residues 41 to 63 and 84 to 110; these read GLVD…LLNP and SPPS…DLPP. Pro residues predominate over residues 49-58; that stretch reads PGSPGSPPPG. The tract at residues 71–137 is transcription activation; that stretch reads GRFSAAPLVD…SSFQFFLPLG (67 aa). The segment covering 84–100 has biased composition (low complexity); sequence SPPSGLDSPNGSSSLSP. A transcription repression region spans residues 148-171; it reads SFLPPPKDKCLSPELPLAKQLVCR. The segment at 168–193 adopts a C2H2-type 1 zinc-finger fold; sequence LVCRWAKCNQLFELLQDLVDHVNDHH. The C2H2-type 2; atypical zinc finger occupies 202-229; that stretch reads YCCHWEGCARHGRGFNARYKMLIHIRTH. C2H2-type zinc fingers lie at residues 235–257, 263–287, and 293–317; these read HRCP…NRSH, YVCP…TRTH, and YYCK…IKAH. The disordered stretch occupies residues 436-501; that stretch reads AGSKAEGEKG…NSAASSPEVL (66 aa). Basic and acidic residues predominate over residues 455–470; sequence GLEDHKTPLERTERSR. Positions 487–496 are enriched in polar residues; sequence DLSTGNSAAS.

It belongs to the GLI C2H2-type zinc-finger protein family. As to quaternary structure, interacts with CTBP1 and HDAC3. Interacts with CTNNB1 and CTNND1. Interacts with SUFU. Post-translationally, C-terminus cleavage is induced by interaction with CTNND1 and enhances by Src tyrosine kinase. Expressed at high levels in kidney, and at lower levels in heart and lung.

It is found in the nucleus speckle. It localises to the cytoplasm. In terms of biological role, can act either as a transcriptional repressor or as a transcriptional activator, depending on the cell context. Acts as a repressor of the Hedgehog signaling pathway. Represses the Hedgehog-dependent expression of Wnt4. Necessary to maintain the differentiated epithelial phenotype in renal cells through the inhibition of SNAI1, which itself induces the epithelial-to-mesenchymal transition. Represses transcriptional activation by CTNNB1 in the Wnt signaling pathway. May act by recruiting the corepressors CTBP1 and HDAC3. May be involved in neuron differentiation. The sequence is that of Zinc finger protein GLIS2 (Glis2) from Mus musculus (Mouse).